The sequence spans 100 residues: Protein alpha-2 (100 aa).

The chain is Protein alpha-2 from Bos taurus (Bovine).